A 265-amino-acid chain; its full sequence is Ribosomal RNA small subunit methyltransferase A (265 aa).

S-adenosyl-L-methionine is bound by residues His11, Leu13, Gly38, Glu59, Asp83, and Asn100.

It belongs to the class I-like SAM-binding methyltransferase superfamily. rRNA adenine N(6)-methyltransferase family. RsmA subfamily.

It is found in the cytoplasm. The catalysed reaction is adenosine(1518)/adenosine(1519) in 16S rRNA + 4 S-adenosyl-L-methionine = N(6)-dimethyladenosine(1518)/N(6)-dimethyladenosine(1519) in 16S rRNA + 4 S-adenosyl-L-homocysteine + 4 H(+). In terms of biological role, specifically dimethylates two adjacent adenosines (A1518 and A1519) in the loop of a conserved hairpin near the 3'-end of 16S rRNA in the 30S particle. May play a critical role in biogenesis of 30S subunits. The sequence is that of Ribosomal RNA small subunit methyltransferase A from Thermosynechococcus vestitus (strain NIES-2133 / IAM M-273 / BP-1).